A 304-amino-acid polypeptide reads, in one-letter code: MIYTMKKVHALWASVCLLLNLAPAPLNADSEEDEEHTIITDTELPPLKLMHSFCAFKADDGPCKAIMKRFFFNIFTRQCEEFIYGGCEGNQNRFESLEECKKMCTRDNANRIIKTTLQQEKPDFCFLEEDPGICRGYITRYFYNNQTKQCERFKYGGCLGNMNNFETLEECKNICEDGPNGFQVDNYGTQLNAVNNSLTPQSTKVPSLFEFHGPSWCLTPADRGLCRANENRFYYNSVIGKCRPFKYSGCGGNENNFTSKQECLRACKKGFIQRISKGGLIKTKRKRKKQRVKIAYEEIFVKNM.

An N-terminal signal peptide occupies residues 1–28 (MIYTMKKVHALWASVCLLLNLAPAPLNA). O-linked (GalNAc...) threonine; partial glycosylation is present at Thr-42. BPTI/Kunitz inhibitor domains lie at 54 to 104 (CAFK…KKMC) and 125 to 175 (CFLE…KNIC). 6 disulfide bridges follow: Cys-54-Cys-104, Cys-63-Cys-87, Cys-79-Cys-100, Cys-125-Cys-175, Cys-134-Cys-158, and Cys-150-Cys-171. A glycan (N-linked (GlcNAc...) asparagine) is linked at Asn-145. A glycan (N-linked (GlcNAc...) asparagine) is linked at Asn-195. A glycan (O-linked (GalNAc...) serine; partial) is linked at Ser-202. O-linked (GalNAc...) threonine glycosylation is present at Thr-203. The BPTI/Kunitz inhibitor 3 domain maps to 217-267 (CLTPADRGLCRANENRFYYNSVIGKCRPFKYSGCGGNENNFTSKQECLRAC). Disulfide bonds link Cys-217–Cys-267, Cys-226–Cys-250, and Cys-242–Cys-263.

Post-translationally, O-glycosylated. Mostly in endothelial cells.

It is found in the secreted. Its subcellular location is the microsome membrane. Inhibits factor X (X(a)) directly and, in a Xa-dependent way, inhibits VIIa/tissue factor activity, presumably by forming a quaternary Xa/LACI/VIIa/TF complex. It possesses an antithrombotic action and also the ability to associate with lipoproteins in plasma. The sequence is that of Tissue factor pathway inhibitor (TFPI) from Homo sapiens (Human).